The primary structure comprises 216 residues: Phosphoribosylformylglycinamidine synthase subunit PurQ (216 aa).

The Glutamine amidotransferase type-1 domain occupies 2–216 (SIGVIVFPGS…GRRMLEALLG (215 aa)). Catalysis depends on Cys86, which acts as the Nucleophile. Active-site residues include His193 and Glu195.

As to quaternary structure, part of the FGAM synthase complex composed of 1 PurL, 1 PurQ and 2 PurS subunits.

It is found in the cytoplasm. It carries out the reaction N(2)-formyl-N(1)-(5-phospho-beta-D-ribosyl)glycinamide + L-glutamine + ATP + H2O = 2-formamido-N(1)-(5-O-phospho-beta-D-ribosyl)acetamidine + L-glutamate + ADP + phosphate + H(+). The enzyme catalyses L-glutamine + H2O = L-glutamate + NH4(+). It participates in purine metabolism; IMP biosynthesis via de novo pathway; 5-amino-1-(5-phospho-D-ribosyl)imidazole from N(2)-formyl-N(1)-(5-phospho-D-ribosyl)glycinamide: step 1/2. Part of the phosphoribosylformylglycinamidine synthase complex involved in the purines biosynthetic pathway. Catalyzes the ATP-dependent conversion of formylglycinamide ribonucleotide (FGAR) and glutamine to yield formylglycinamidine ribonucleotide (FGAM) and glutamate. The FGAM synthase complex is composed of three subunits. PurQ produces an ammonia molecule by converting glutamine to glutamate. PurL transfers the ammonia molecule to FGAR to form FGAM in an ATP-dependent manner. PurS interacts with PurQ and PurL and is thought to assist in the transfer of the ammonia molecule from PurQ to PurL. This chain is Phosphoribosylformylglycinamidine synthase subunit PurQ, found in Synechococcus sp. (strain CC9605).